A 982-amino-acid chain; its full sequence is Serine/threonine-protein kinase SULU (982 aa).

Positions 30 to 289 (YQDLREIGHG…AEECFRHPFI (260 aa)) constitute a Protein kinase domain. ATP contacts are provided by residues 36 to 44 (IGHGSFGAV) and lysine 59. Aspartate 153 (proton acceptor) is an active-site residue. Disordered stretches follow at residues 331–484 (GKEG…PLDT), 592–620 (QNNE…QNQQ), 751–789 (LETQ…RDLK), and 957–982 (RTGS…QMAM). Positions 353-373 (SIGRAGDSASSRSASLTSFRS) are enriched in low complexity. Positions 421-431 (QMLSSTSTSGV) are enriched in polar residues. Residues 459–472 (IPTSQPTSKSESSS) show a composition bias toward low complexity. Over residues 595-608 (ELDKRKKDIEDGEK) the composition is skewed to basic and acidic residues. Residues 759-768 (SASQNEYTQR) are compositionally biased toward polar residues. The span at 957–967 (RTGSTSRSSGG) shows a compositional bias: low complexity. Residues 973-982 (GNSSSIQMAM) are compositionally biased toward polar residues.

It belongs to the protein kinase superfamily. Ser/Thr protein kinase family. STE20 subfamily. The cofactor is Mg(2+). As to expression, expressed in the pharynx, including the pharyngeal muscle of the metacorpus, the isthmus, and the terminal bulb; in the intestine, including the pharyngeointestinal valve between the pharynx and the intestine, a structure near the anus likely to be the anal sphincter and the excretory cell and in several ring neurons.

It localises to the cytoplasm. Its subcellular location is the cytoskeleton. It is found in the cell cortex. It catalyses the reaction L-seryl-[protein] + ATP = O-phospho-L-seryl-[protein] + ADP + H(+). The enzyme catalyses L-threonyl-[protein] + ATP = O-phospho-L-threonyl-[protein] + ADP + H(+). In terms of biological role, acts as a negative regulator of cortical contractions during early embryonic cell division, possibly by regulating rho-1-dependent actomyosin contractility. Plays a role in polarity establishment in early embryos by regulating the size of the anterior and posterior cortex in the first asymmetric cell division. Might play a role in cell cycle progression. In the germline, involved in the regulation of meiotic progression during oogenesis, possibly by modulating the timing of mpk-1 activation. Plays a role in meiotic recombination events. Involved in pharyngeal pumping. The sequence is that of Serine/threonine-protein kinase SULU (kin-18) from Caenorhabditis elegans.